A 163-amino-acid chain; its full sequence is Lipoprotein signal peptidase (163 aa).

3 helical membrane passes run 11–31, 63–83, and 88–108; these read ILIAVFVVIFDQVTKYIIATT, KMTFFFIITIIILIALVYFFI, and YNLFMQVAISLLFAGALGNFI. Active-site residues include D118 and D136. Residues 131 to 151 form a helical membrane-spanning segment; the sequence is IFNIADSSLTIGVILIIIALL.

Belongs to the peptidase A8 family.

The protein localises to the cell membrane. It carries out the reaction Release of signal peptides from bacterial membrane prolipoproteins. Hydrolyzes -Xaa-Yaa-Zaa-|-(S,diacylglyceryl)Cys-, in which Xaa is hydrophobic (preferably Leu), and Yaa (Ala or Ser) and Zaa (Gly or Ala) have small, neutral side chains.. Its pathway is protein modification; lipoprotein biosynthesis (signal peptide cleavage). This protein specifically catalyzes the removal of signal peptides from prolipoproteins. In Staphylococcus aureus, this protein is Lipoprotein signal peptidase.